A 244-amino-acid polypeptide reads, in one-letter code: 3-deoxy-manno-octulosonate cytidylyltransferase (244 aa).

Belongs to the KdsB family.

Its subcellular location is the cytoplasm. The catalysed reaction is 3-deoxy-alpha-D-manno-oct-2-ulosonate + CTP = CMP-3-deoxy-beta-D-manno-octulosonate + diphosphate. The protein operates within nucleotide-sugar biosynthesis; CMP-3-deoxy-D-manno-octulosonate biosynthesis; CMP-3-deoxy-D-manno-octulosonate from 3-deoxy-D-manno-octulosonate and CTP: step 1/1. Its pathway is bacterial outer membrane biogenesis; lipopolysaccharide biosynthesis. In terms of biological role, activates KDO (a required 8-carbon sugar) for incorporation into bacterial lipopolysaccharide in Gram-negative bacteria. This is 3-deoxy-manno-octulosonate cytidylyltransferase from Vesicomyosocius okutanii subsp. Calyptogena okutanii (strain HA).